Here is a 545-residue protein sequence, read N- to C-terminus: Chaperonin GroEL (545 aa).

Residues 30–33 (TMGP), lysine 51, 87–91 (DGTTT), glycine 415, and aspartate 494 contribute to the ATP site.

The protein belongs to the chaperonin (HSP60) family. Forms a cylinder of 14 subunits composed of two heptameric rings stacked back-to-back. Interacts with the co-chaperonin GroES.

The protein resides in the cytoplasm. The catalysed reaction is ATP + H2O + a folded polypeptide = ADP + phosphate + an unfolded polypeptide.. Functionally, together with its co-chaperonin GroES, plays an essential role in assisting protein folding. The GroEL-GroES system forms a nano-cage that allows encapsulation of the non-native substrate proteins and provides a physical environment optimized to promote and accelerate protein folding. This is Chaperonin GroEL from Helicobacter hepaticus (strain ATCC 51449 / 3B1).